Reading from the N-terminus, the 704-residue chain is Polyribonucleotide nucleotidyltransferase (704 aa).

2 residues coordinate Mg(2+): Asp486 and Asp492. The 60-residue stretch at 553 to 612 (PKIVIVKINPDKIRDVIGPGGKQINKIIEETGVKIDTEQDGTIYISSANEEMNARAKQII) folds into the KH domain. In terms of domain architecture, S1 motif spans 622–690 (GEYYLSTVKR…KQGRVNLSRK (69 aa)).

This sequence belongs to the polyribonucleotide nucleotidyltransferase family. It depends on Mg(2+) as a cofactor.

It is found in the cytoplasm. The enzyme catalyses RNA(n+1) + phosphate = RNA(n) + a ribonucleoside 5'-diphosphate. Functionally, involved in mRNA degradation. Catalyzes the phosphorolysis of single-stranded polyribonucleotides processively in the 3'- to 5'-direction. The sequence is that of Polyribonucleotide nucleotidyltransferase from Lysinibacillus sphaericus (strain C3-41).